A 555-amino-acid chain; its full sequence is Formate--tetrahydrofolate ligase (555 aa).

An ATP-binding site is contributed by 64–71 (TKAGIGKT).

The protein belongs to the formate--tetrahydrofolate ligase family.

It catalyses the reaction (6S)-5,6,7,8-tetrahydrofolate + formate + ATP = (6R)-10-formyltetrahydrofolate + ADP + phosphate. It functions in the pathway one-carbon metabolism; tetrahydrofolate interconversion. The protein is Formate--tetrahydrofolate ligase of Phocaeicola vulgatus (strain ATCC 8482 / DSM 1447 / JCM 5826 / CCUG 4940 / NBRC 14291 / NCTC 11154) (Bacteroides vulgatus).